A 237-amino-acid polypeptide reads, in one-letter code: Pyridoxine 5'-phosphate synthase (237 aa).

Asparagine 7 and arginine 18 together coordinate 3-amino-2-oxopropyl phosphate. Histidine 43 functions as the Proton acceptor in the catalytic mechanism. 1-deoxy-D-xylulose 5-phosphate contacts are provided by arginine 45 and histidine 50. Glutamate 70 functions as the Proton acceptor in the catalytic mechanism. Threonine 100 provides a ligand contact to 1-deoxy-D-xylulose 5-phosphate. The active-site Proton donor is the histidine 190. Residues aspartate 191 and 213 to 214 (GH) each bind 3-amino-2-oxopropyl phosphate.

The protein belongs to the PNP synthase family. In terms of assembly, homooctamer; tetramer of dimers.

It is found in the cytoplasm. It catalyses the reaction 3-amino-2-oxopropyl phosphate + 1-deoxy-D-xylulose 5-phosphate = pyridoxine 5'-phosphate + phosphate + 2 H2O + H(+). It functions in the pathway cofactor biosynthesis; pyridoxine 5'-phosphate biosynthesis; pyridoxine 5'-phosphate from D-erythrose 4-phosphate: step 5/5. Functionally, catalyzes the complicated ring closure reaction between the two acyclic compounds 1-deoxy-D-xylulose-5-phosphate (DXP) and 3-amino-2-oxopropyl phosphate (1-amino-acetone-3-phosphate or AAP) to form pyridoxine 5'-phosphate (PNP) and inorganic phosphate. This Flavobacterium johnsoniae (strain ATCC 17061 / DSM 2064 / JCM 8514 / BCRC 14874 / CCUG 350202 / NBRC 14942 / NCIMB 11054 / UW101) (Cytophaga johnsonae) protein is Pyridoxine 5'-phosphate synthase.